We begin with the raw amino-acid sequence, 21 residues long: Cytoplasmic filament protein A (21 aa).

The segment at 1 to 21 (AILELPQSPNVFHPEKPSAVG) is disordered.

Its subcellular location is the cytoplasm. Its function is as follows. Component of the cytoplasmic filaments that run the length of the organism just underneath the cytoplasmic membrane. The polypeptide is Cytoplasmic filament protein A (cfpA) (Treponema phagedenis).